The chain runs to 214 residues: tRNA (guanine-N(7)-)-methyltransferase (214 aa).

Glu44, Glu69, Asp96, and Asp118 together coordinate S-adenosyl-L-methionine. The active site involves Asp118. Lys122 lines the substrate pocket. The tract at residues Arg124–Arg129 is interaction with RNA. Substrate-binding positions include Asp154 and Thr192–Glu195.

This sequence belongs to the class I-like SAM-binding methyltransferase superfamily. TrmB family.

The catalysed reaction is guanosine(46) in tRNA + S-adenosyl-L-methionine = N(7)-methylguanosine(46) in tRNA + S-adenosyl-L-homocysteine. The protein operates within tRNA modification; N(7)-methylguanine-tRNA biosynthesis. Functionally, catalyzes the formation of N(7)-methylguanine at position 46 (m7G46) in tRNA. The chain is tRNA (guanine-N(7)-)-methyltransferase from Lactiplantibacillus plantarum (strain ATCC BAA-793 / NCIMB 8826 / WCFS1) (Lactobacillus plantarum).